A 432-amino-acid chain; its full sequence is Transcription factor E2F1 (432 aa).

2 disordered regions span residues 39 to 85 (DVGA…GRPP) and 98 to 126 (YLAGSSGPFRGRGRHPGKGVKSPGEKSRY). The segment at 65–106 (ATPQAPRPAPSAPRPALGRPPVKRRLDLETDHQYLAGSSGPF) is cyclin A:CDK2 binding. Positions 87–189 (KRRLDLETDH…KKSKNHIQWL (103 aa)) are interaction with BIRC2/c-IAP1. A DNA-binding region spans residues 108–192 (GRGRHPGKGV…KNHIQWLGSR (85 aa)). Residues lysine 115, lysine 118, and lysine 123 each carry the N6-acetyllysine modification. The tract at residues 151–172 (LNWAAEVLKVQKRRIYDITNVL) is leucine-zipper. A DEF box motif is present at residues 156–192 (EVLKVQKRRIYDITNVLEGIQLIAKKSKNHIQWLGSR). Residue lysine 183 is modified to N6-methyllysine; by SETD7. The tract at residues 190–377 (GSRTMVGIGQ…RLSPLVAADS (188 aa)) is required for interaction with TRIM28. Residues 193–282 (TMVGIGQRLE…AVDSAETFQI (90 aa)) are dimerization. Residues 297–342 (PEESAEGISPGRTSYQETSGEDRNADSGTAGPPPSPPSTSPTLDPS) are disordered. A transactivation region spans residues 363–432 (PMEEDRLSPL…DFGDLTPLDF (70 aa)). A phosphoserine mark is found at serine 370 and serine 398. An RB1 binding region spans residues 404–421 (VDYHFGLEEGEGIRDLFD). Threonine 428 bears the Phosphothreonine mark.

It belongs to the E2F/DP family. Component of the DRTF1/E2F transcription factor complex. Forms heterodimers with DP family members. The E2F1 complex binds specifically hypophosphorylated RB1, the interaction represses E2F1-driven transcription. During the cell cycle, RB1 becomes phosphorylated in mid-to-late G1 phase, detaches from the DRTF1/E2F complex, rendering E2F transcriptionally active. Interacts with TRRAP, which probably mediates its interaction with histone acetyltransferase complexes, leading to transcription activation. Binds TOPBP1 and EAPP. Interacts with ARID3A. Interacts with TRIM28; the interaction inhibits E2F1 acetylation through recruiting HDAC1 and represses its transcriptional activity. Interaction with KAT2B; the interaction acetylates E2F1 enhancing its DNA-binding and transcriptional activity. Interacts with BIRC2/c-IAP1 (via BIR domains). The complex TFDP1:E2F1 interacts with CEBPA; the interaction prevents CEBPA binding to target genes promoters and represses its transcriptional activity. Interacts with RRP1B. Interacts with HCFC1. Interacts with KMT2E; the interaction is probably indirect and is mediated via HCFC1. Interacts with DCAF5 and L3MBTL3; the interaction requires methylation at Lys-183 and is necessary to target E2F1 for ubiquitination by the CRL4-DCAF5 E3 ubiquitin ligase complex. Post-translationally, phosphorylated by CDK2 and cyclin A-CDK2 in the S-phase. Phosphorylation by CHEK2 stabilizes E2F1 upon DNA damage and regulates its effect on transcription and apoptosis. Phosphorylation at Ser-398 by GSK3B promotes interaction with USP11, leading to its deubiquitination and stabilization. In terms of processing, ubiquitinated via 'Lys-63'-linked ubiquitin, leading to its degradation. Deubiquitinated by USP11 following phosphorylation by GSK3B, promoting its stability. Acetylation stimulates DNA-binding. Enhanced under stress conditions such as DNA damage and inhibited by retinoblastoma protein RB1. Regulated by KAP1/TRIM28 which recruits HDAC1 to E2F1 resulting in deacetylation. Post-translationally, methylation at Lys-183 by SETD7 promotes E2F1 ubiquitin-dependent proteasomal degradation.

It is found in the nucleus. BIRC2/c-IAP1 stimulates its transcriptional activity. Functionally, transcription activator that binds DNA cooperatively with DP proteins through the E2 recognition site, 5'-TTTC[CG]CGC-3' found in the promoter region of a number of genes whose products are involved in cell cycle regulation or in DNA replication. The DRTF1/E2F complex functions in the control of cell-cycle progression from G1 to S phase. E2F1 binds preferentially RB1 in a cell-cycle dependent manner. It can mediate both cell proliferation and TP53/p53-dependent apoptosis. Blocks adipocyte differentiation by binding to specific promoters repressing CEBPA binding to its target gene promoters. Directly activates transcription of PEG10. Positively regulates transcription of RRP1B. The chain is Transcription factor E2F1 from Rattus norvegicus (Rat).